A 570-amino-acid chain; its full sequence is Serine/threonine-protein kinase flr-4 (570 aa).

One can recognise a Protein kinase domain in the interval 40 to 331 (YKYIQDLGKG…KLRIQIKKIL (292 aa)). ATP is bound by residues 46-54 (LGKGRFGTV) and K67. The Proton acceptor role is filled by D172. Positions 338-369 (EEETDISHPISNSNTDSSTAISHNHSNDRKVG) are disordered. The segment covering 346-361 (PISNSNTDSSTAISHN) has biased composition (polar residues). 3 helical membrane-spanning segments follow: residues 400 to 420 (IMQI…FLNI), 425 to 445 (ICYL…FLLI), and 471 to 491 (LIIS…CCMV). A disordered region spans residues 550–570 (VRRNHDDYYYDESSGPANEEN).

This sequence belongs to the protein kinase superfamily. Ser/Thr protein kinase family. Present in the intestinal cells from comma-stage embryos through the adult stage, although the intestinal expression is weaker after the L1 stage. Accumulates at the cell membrane of intestinal cells, especially the lateral membrane intervening the intestinal cells. Also detected in the muscles of the pharyngeal isthmus from the 3-fold embryonic stage, and in a pair of head neurons, which correspond to the AUA neurons, from the late L1 stage (at protein level).

It localises to the membrane. It catalyses the reaction L-seryl-[protein] + ATP = O-phospho-L-seryl-[protein] + ADP + H(+). It carries out the reaction L-threonyl-[protein] + ATP = O-phospho-L-threonyl-[protein] + ADP + H(+). Functionally, probable serine-threonine protein kinase involved in the control of defecation rhythms. Required to increase the length of defecation cycle period. Acts in a cell-functional rather than developmental aspect in the regulation of defecation rhythms. Prevents preferential activation of the p38 MAPK pathway in response to the levels of vitamin B12 in different food types during larval development, thereby regulating the expression of cytoprotective genes, modulating life span and stress tolerance. The polypeptide is Serine/threonine-protein kinase flr-4 (flr-4) (Caenorhabditis elegans).